A 296-amino-acid polypeptide reads, in one-letter code: Probable alpha-L-glutamate ligase (296 aa).

The 184-residue stretch at 104–287 (LQLLARQGID…IATLMITFIE (184 aa)) folds into the ATP-grasp domain. Residues Lys-141, 178–179 (EF), Asp-187, and 211–213 (RSN) each bind ATP. Mg(2+)-binding residues include Asp-248, Glu-260, and Asn-262. Positions 248, 260, and 262 each coordinate Mn(2+).

This sequence belongs to the RimK family. Mg(2+) serves as cofactor. It depends on Mn(2+) as a cofactor.

This chain is Probable alpha-L-glutamate ligase, found in Sodalis glossinidius (strain morsitans).